Here is a 132-residue protein sequence, read N- to C-terminus: MFDGIGFMELLLIGILGLVVLGPERLPVAVRSITGWIRAMKRMANSVKDELEQELKIEQLHSDLKKAENQGLKDLSPELQDSIDQLKEAAQSVNRPYKIEETPSASSSAPSESTPSEAPTAEVSANPDKSNR.

The chain crosses the membrane as a helical span at residues F2–G22. Residues E68–R132 are disordered. The segment covering T102 to E122 has biased composition (low complexity).

This sequence belongs to the TatB family. The Tat system comprises two distinct complexes: a TatABC complex, containing multiple copies of TatA, TatB and TatC subunits, and a separate TatA complex, containing only TatA subunits. Substrates initially bind to the TatABC complex, which probably triggers association of the separate TatA complex to form the active translocon.

The protein resides in the cell inner membrane. Functionally, part of the twin-arginine translocation (Tat) system that transports large folded proteins containing a characteristic twin-arginine motif in their signal peptide across membranes. Together with TatC, TatB is part of a receptor directly interacting with Tat signal peptides. TatB may form an oligomeric binding site that transiently accommodates folded Tat precursor proteins before their translocation. This Shewanella woodyi (strain ATCC 51908 / MS32) protein is Sec-independent protein translocase protein TatB.